Here is a 243-residue protein sequence, read N- to C-terminus: PHO85 cyclin-like protein psl1 (243 aa).

The segment covering 211-224 has biased composition (polar residues); sequence ESPISHTPQQNQQD. Residues 211 to 231 form a disordered region; that stretch reads ESPISHTPQQNQQDEQPRRPI.

The protein belongs to the cyclin family. PHO80 subfamily. Forms a cyclin-CDK complex with pef1.

Its subcellular location is the cytoplasm. It localises to the nucleus. In terms of biological role, cyclin partner of the cyclin-dependent kinase (CDK) pef1 (PHO85 homolog). This Schizosaccharomyces pombe (strain 972 / ATCC 24843) (Fission yeast) protein is PHO85 cyclin-like protein psl1 (psl1).